The following is a 107-amino-acid chain: Nucleoid-associated protein RC1_2305 (107 aa).

It belongs to the YbaB/EbfC family. In terms of assembly, homodimer.

Its subcellular location is the cytoplasm. It is found in the nucleoid. Functionally, binds to DNA and alters its conformation. May be involved in regulation of gene expression, nucleoid organization and DNA protection. The sequence is that of Nucleoid-associated protein RC1_2305 from Rhodospirillum centenum (strain ATCC 51521 / SW).